Reading from the N-terminus, the 306-residue chain is Oligopeptide transport system permease protein OppB (306 aa).

Topologically, residues 1-12 (MLKFILRRCLEA) are cytoplasmic. A helical membrane pass occupies residues 13–30 (IPTLFILITISFFMMRLA). Residues 31–101 (PGSPFTGERA…ASFPVSAKLG (71 aa)) are Periplasmic-facing. Positions 94-293 (FPVSAKLGAA…ALTILFNAIV (200 aa)) constitute an ABC transmembrane type-1 domain. The helical transmembrane segment at 102-121 (AAAFLLAVIIGVSAGVIAAL) threads the bilayer. Residues 122–133 (KQNTRWDYTVMG) are Cytoplasmic-facing. The helical transmembrane segment at 134–156 (FAMTGVVIPSFVVAPLLVMVFAI) threads the bilayer. Over 157 to 165 (TLQWLPGGG) the chain is Periplasmic. Residues 166–188 (WNGGALKFMILPMVALSLAYIAS) traverse the membrane as a helical segment. Topologically, residues 189–227 (IARITRGSMIEVLHSNFIRTARAKGLPMRRIIFRHALKP) are cytoplasmic. Residues 228–250 (ALLPVLSYMGPAFVGIITGSMVI) traverse the membrane as a helical segment. At 251 to 277 (ETIYGLPGIGQLFVNGALNRDYSLVLS) the chain is on the periplasmic side. Residues 278 to 300 (LTILVGALTILFNAIVDVLYAVI) form a helical membrane-spanning segment. Over 301–306 (DPKIRY) the chain is Cytoplasmic.

It belongs to the binding-protein-dependent transport system permease family. OppBC subfamily. The complex is composed of two ATP-binding proteins (OppD and OppF), two transmembrane proteins (OppB and OppC) and a solute-binding protein (OppA).

The protein resides in the cell inner membrane. Functionally, part of the ABC transporter complex OppABCDF involved in the uptake of oligopeptides, including the cell wall murein tripeptide L-alanyl-gamma-D-glutamyl-meso-diaminopimelate. Responsible for the translocation of the substrate across the membrane. Plays an important nutritional role and is involved in the recycling of cell wall peptides. The chain is Oligopeptide transport system permease protein OppB from Salmonella typhimurium (strain LT2 / SGSC1412 / ATCC 700720).